The chain runs to 473 residues: Anthocyanidin 5,3-O-glucosyltransferase (473 aa).

It belongs to the UDP-glycosyltransferase family.

The protein operates within pigment biosynthesis; anthocyanin biosynthesis. Sequentially catalyzes two glycosylation steps at the 5-OH and 3-OH positions of anthocyanidin. Unglycosylated anthocyanidin or anthocyanidin 5-O-glucoside, but not anthocyanidin 3-O-glucoside, can be used as glucosyl acceptor. The polypeptide is Anthocyanidin 5,3-O-glucosyltransferase (RhGT1) (Rosa hybrid cultivar).